A 1335-amino-acid polypeptide reads, in one-letter code: Bifunctional autolysin (1335 aa).

The N-terminal stretch at 1–29 (MAKKFNYKLPSMVALTLFGTAFTAHQANA) is a signal peptide. Disordered stretches follow at residues 51–88 (QAEKAKSEVTQSTTNVSGTQTYQDPTQVQPKQDTQSTT), 100–262 (NEIS…KYKE), and 514–535 (WGTTSTKPSQPSKPSGGTNNKL). Composition is skewed to polar residues over residues 58–88 (EVTQSTTNVSGTQTYQDPTQVQPKQDTQSTT), 100–127 (NEISSNQKQQSLSTDDANQNQTNSVTKN), 143–155 (TDTNQLQETQSVA), 176–223 (TASQ…NASG), and 244–258 (SLNNVNATSKQTTSY). An N-acetylmuramoyl-L-alanine amidase region spans residues 303–863 (VSSQKTSSLP…LSTQSTPAPK (561 aa)). A compositionally biased stretch (low complexity) spans 515-531 (GTTSTKPSQPSKPSGGT). 7 consecutive GW domains span residues 533-610 (NKLT…YNTA), 612-686 (APVK…TASK), 700-774 (TVTN…YNTA), 776-850 (SPVK…APSK), 868-943 (STQT…TQNI), 945-1020 (KQTQ…QNST), and 1023-1096 (QSTP…KEKI). Positions 864-1335 (QVKPSTQTVN…GKYFEIPIYK (472 aa)) are endo-beta-N-acetylglucosaminidase.

It in the N-terminal section; belongs to the N-acetylmuramoyl-L-alanine amidase 2 family. The protein in the C-terminal section; belongs to the glycosyl hydrolase 73 family. As to quaternary structure, oligomer; forms a ring structure at the cell surface which is important for efficient partitioning of daughter cells after cell division. In terms of processing, undergoes proteolytic processing to generate the two extracellular lytic enzymes, probably at the septal region on the cell surface.

The protein resides in the secreted. It catalyses the reaction Hydrolyzes the link between N-acetylmuramoyl residues and L-amino acid residues in certain cell-wall glycopeptides.. It carries out the reaction an N(4)-(oligosaccharide-(1-&gt;3)-[oligosaccharide-(1-&gt;6)]-beta-D-Man-(1-&gt;4)-beta-D-GlcNAc-(1-&gt;4)-alpha-D-GlcNAc)-L-asparaginyl-[protein] + H2O = an oligosaccharide-(1-&gt;3)-[oligosaccharide-(1-&gt;6)]-beta-D-Man-(1-&gt;4)-D-GlcNAc + N(4)-(N-acetyl-beta-D-glucosaminyl)-L-asparaginyl-[protein]. Functionally, endohydrolysis of the di-N-acetylchitobiosyl unit in high-mannose glycopeptides and glycoproteins containing the -[(Man)5(GlcNAc)2]-Asn structure. One N-acetyl-D-glucosamine residue remains attached to the protein; the rest of the oligosaccharide is released intact. Cleaves the peptidoglycan connecting the daughter cells at the end of the cell division cycle, resulting in the separation of the two newly divided cells. Acts as an autolysin in penicillin-induced lysis. This Staphylococcus epidermidis (strain ATCC 12228 / FDA PCI 1200) protein is Bifunctional autolysin (atl).